The chain runs to 93 residues: UPF0358 protein lmo1070 (93 aa).

Belongs to the UPF0358 family.

The sequence is that of UPF0358 protein lmo1070 from Listeria monocytogenes serovar 1/2a (strain ATCC BAA-679 / EGD-e).